The following is a 757-amino-acid chain: Centrosomal protein of 68 kDa (757 aa).

Basic and acidic residues-rich tracts occupy residues 1–17 (MALG…EDTK) and 86–96 (ANREPVAERSE). Disordered regions lie at residues 1–47 (MALG…RLEA), 67–158 (WIGT…PSLA), 192–259 (QPSS…GGDA), 311–480 (PGPQ…ESDD), 509–551 (PTGD…SGDP), and 597–618 (LDRW…GGEQ). The segment covering 125–144 (LSSSEEFPQTLSLPRTTTIC) has biased composition (polar residues). 2 stretches are compositionally biased toward low complexity: residues 192 to 206 (QPSS…TGSS) and 224 to 240 (VSSS…SSVV). The residue at position 332 (serine 332) is a Phosphoserine; by PLK1. Positions 339–355 (FSVSPASTLKSPTNVSP) are enriched in polar residues. 2 stretches are compositionally biased toward basic and acidic residues: residues 405-432 (GSRD…KHLD) and 439-456 (RTRD…EKRT). Polar residues predominate over residues 457–467 (SQSARRPTCTE). A phosphoserine mark is found at serine 472 and serine 478. Over residues 524-543 (SDGPASFPSSSSQSQLPPGA) the composition is skewed to low complexity.

As to quaternary structure, interacts with CNTLN; the interaction recruits CEP68 to the centrosome. Interacts with the SCF(FBXW11) complex which contains SKP1, CUL1 and FBXW11; the interaction is probably mediated by FBXW11 and the complex also contains CDK5RAP2 and PCNT. Also interacts with F-box protein BTRC. Interacts with serine/threonine-protein kinase PLK1; the interaction leads to phosphorylation of CEP68 and its subsequent degradation. Interacts with NEK2; the interaction leads to phosphorylation of CEP68. Post-translationally, phosphorylation by PLK1 is required for binding to BTRC in prometaphase. Phosphorylated directly or indirectly by NEK2. NEK2-mediated phosphorylation promotes CEP68 dissociation from the centrosome and its degradation at the onset of mitosis. In terms of processing, ubiquitinated and targeted for proteasomal degradation in early mitosis by the SCF(BTRC) and/or SCF(FBXW11) E3 ubiquitin-protein ligase complexes. Degradation is complete by prometaphase and is required for removal of CDK5RAP2 from the peripheral pericentriolar material and subsequent centriole separation.

Its subcellular location is the cytoplasm. The protein localises to the cytoskeleton. It localises to the microtubule organizing center. It is found in the centrosome. Its function is as follows. Involved in maintenance of centrosome cohesion, probably as part of a linker structure which prevents centrosome splitting. Required for localization of CDK5RAP2 to the centrosome during interphase. Contributes to CROCC/rootletin filament formation. This chain is Centrosomal protein of 68 kDa (CEP68), found in Homo sapiens (Human).